We begin with the raw amino-acid sequence, 451 residues long: GTPase Der (451 aa).

2 EngA-type G domains span residues 5-170 (PVVA…VAPP) and 186-359 (IKLA…AAAF). GTP-binding positions include 11–18 (GRPNVGKS), 58–62 (DTGGF), 122–125 (NKAE), 192–199 (GRPNVGKS), 239–243 (DTAGL), and 304–307 (NKWD). The 85-residue stretch at 360–444 (AKLSTPRLTR…PLRIEFKSSR (85 aa)) folds into the KH-like domain.

This sequence belongs to the TRAFAC class TrmE-Era-EngA-EngB-Septin-like GTPase superfamily. EngA (Der) GTPase family. As to quaternary structure, associates with the 50S ribosomal subunit.

In terms of biological role, GTPase that plays an essential role in the late steps of ribosome biogenesis. The chain is GTPase Der from Bordetella bronchiseptica (strain ATCC BAA-588 / NCTC 13252 / RB50) (Alcaligenes bronchisepticus).